Reading from the N-terminus, the 379-residue chain is DNA replication and repair protein RecF (379 aa).

30-37 (GKNAQGKT) serves as a coordination point for ATP.

Belongs to the RecF family.

It is found in the cytoplasm. The RecF protein is involved in DNA metabolism; it is required for DNA replication and normal SOS inducibility. RecF binds preferentially to single-stranded, linear DNA. It also seems to bind ATP. The protein is DNA replication and repair protein RecF of Ligilactobacillus salivarius (strain UCC118) (Lactobacillus salivarius).